Here is a 351-residue protein sequence, read N- to C-terminus: tRNA (guanine(26)-N(2))-dimethyltransferase (351 aa).

The 347-residue stretch at 4-350 folds into the Trm1 methyltransferase domain; it reads VLRREGAVQF…AGYGEVKRAL (347 aa). Positions 39, 65, 83, 109, and 110 each coordinate S-adenosyl-L-methionine.

Belongs to the class I-like SAM-binding methyltransferase superfamily. Trm1 family.

The catalysed reaction is guanosine(26) in tRNA + 2 S-adenosyl-L-methionine = N(2)-dimethylguanosine(26) in tRNA + 2 S-adenosyl-L-homocysteine + 2 H(+). Dimethylates a single guanine residue at position 26 of a number of tRNAs using S-adenosyl-L-methionine as donor of the methyl groups. This is tRNA (guanine(26)-N(2))-dimethyltransferase from Pyrobaculum neutrophilum (strain DSM 2338 / JCM 9278 / NBRC 100436 / V24Sta) (Thermoproteus neutrophilus).